Here is a 186-residue protein sequence, read N- to C-terminus: Ribosome-recycling factor (186 aa).

This sequence belongs to the RRF family.

It is found in the cytoplasm. Its function is as follows. Responsible for the release of ribosomes from messenger RNA at the termination of protein biosynthesis. May increase the efficiency of translation by recycling ribosomes from one round of translation to another. This chain is Ribosome-recycling factor, found in Cupriavidus necator (strain ATCC 17699 / DSM 428 / KCTC 22496 / NCIMB 10442 / H16 / Stanier 337) (Ralstonia eutropha).